A 529-amino-acid polypeptide reads, in one-letter code: Peptide chain release factor 3 (529 aa).

The tr-type G domain occupies 11–280; sequence AKRRTFAIIS…GLVEWAPAPM (270 aa). Residues 20 to 27, 88 to 92, and 142 to 145 each bind GTP; these read SHPDAGKT, DTPGH, and NKLD.

The protein belongs to the TRAFAC class translation factor GTPase superfamily. Classic translation factor GTPase family. PrfC subfamily.

The protein resides in the cytoplasm. In terms of biological role, increases the formation of ribosomal termination complexes and stimulates activities of RF-1 and RF-2. It binds guanine nucleotides and has strong preference for UGA stop codons. It may interact directly with the ribosome. The stimulation of RF-1 and RF-2 is significantly reduced by GTP and GDP, but not by GMP. The protein is Peptide chain release factor 3 of Klebsiella pneumoniae subsp. pneumoniae (strain ATCC 700721 / MGH 78578).